Here is a 52-residue protein sequence, read N- to C-terminus: UPF0391 membrane protein Avin_10980 (52 aa).

Transmembrane regions (helical) follow at residues 4 to 24 and 29 to 49; these read WSIIFLVVAIIAGLLGFGGIA and GIAKILFALFLILFVVSLLFG.

Belongs to the UPF0391 family.

It localises to the cell membrane. The chain is UPF0391 membrane protein Avin_10980 from Azotobacter vinelandii (strain DJ / ATCC BAA-1303).